A 210-amino-acid chain; its full sequence is Guanylate kinase (210 aa).

Positions 5 to 183 (GILFVISAPS…AVEEFKSIIL (179 aa)) constitute a Guanylate kinase-like domain. 12–19 (APSGAGKT) contributes to the ATP binding site.

Belongs to the guanylate kinase family.

It localises to the cytoplasm. It catalyses the reaction GMP + ATP = GDP + ADP. Functionally, essential for recycling GMP and indirectly, cGMP. The chain is Guanylate kinase from Syntrophotalea carbinolica (strain DSM 2380 / NBRC 103641 / GraBd1) (Pelobacter carbinolicus).